We begin with the raw amino-acid sequence, 771 residues long: DNA helicase/primase complex-associated protein (771 aa).

This sequence belongs to the herpesviridae HEPA family. As to quaternary structure, associates with the primase and the helicase to form the helicase-primase complex. Interacts with the origin-binding protein. Interacts with the polymerase catalytic subunit.

The protein resides in the host nucleus. Its function is as follows. Component of the helicase/primase complex. Unwinds the DNA at the replication forks and generates single-stranded DNA for both leading and lagging strand synthesis. The primase synthesizes short RNA primers on the lagging strand that the polymerase presumably elongates using dNTPs. The primase-associated factor has no known catalytic activity in the complex and may serve to facilitate the formation of the replisome by directly interacting with the origin-binding protein and the polymerase. This Homo sapiens (Human) protein is DNA helicase/primase complex-associated protein.